We begin with the raw amino-acid sequence, 460 residues long: Omega-3 fatty acid desaturase, chloroplastic (460 aa).

Residues 177 to 181 (HDCGH) carry the Histidine box-1 motif. Positions 213-217 (HRTHH) match the Histidine box-2 motif. Positions 380-384 (HVIHH) match the Histidine box-3 motif.

The protein belongs to the fatty acid desaturase type 1 family.

Its subcellular location is the plastid. The protein resides in the chloroplast membrane. Its pathway is lipid metabolism; polyunsaturated fatty acid biosynthesis. In terms of biological role, chloroplast omega-3 fatty acid desaturase introduces the third double bond in the biosynthesis of 16:3 and 18:3 fatty acids, important constituents of plant membranes. It is thought to use ferredoxin as an electron donor and to act on fatty acids esterified to galactolipids, sulfolipids and phosphatidylglycerol. The polypeptide is Omega-3 fatty acid desaturase, chloroplastic (FAD7A-1) (Ricinus communis (Castor bean)).